Reading from the N-terminus, the 272-residue chain is Shikimate dehydrogenase (NADP(+)) (272 aa).

Residues S14–S16 and T61 contribute to the shikimate site. The active-site Proton acceptor is the K65. E77 is an NADP(+) binding site. Residues N86 and D102 each contribute to the shikimate site. NADP(+) is bound by residues G126 to A130, N149 to R154, and M213. Y215 is a shikimate binding site. G237 lines the NADP(+) pocket.

This sequence belongs to the shikimate dehydrogenase family. In terms of assembly, homodimer.

The catalysed reaction is shikimate + NADP(+) = 3-dehydroshikimate + NADPH + H(+). Its pathway is metabolic intermediate biosynthesis; chorismate biosynthesis; chorismate from D-erythrose 4-phosphate and phosphoenolpyruvate: step 4/7. Functionally, involved in the biosynthesis of the chorismate, which leads to the biosynthesis of aromatic amino acids. Catalyzes the reversible NADPH linked reduction of 3-dehydroshikimate (DHSA) to yield shikimate (SA). The protein is Shikimate dehydrogenase (NADP(+)) of Salmonella enteritidis PT4 (strain P125109).